Consider the following 61-residue polypeptide: UPF0337 protein LMOf2365_2190 (61 aa).

The tract at residues 1–61 (MSEDKGMKDK…TGDAKKKLSE (61 aa)) is disordered.

Belongs to the UPF0337 (CsbD) family.

The sequence is that of UPF0337 protein LMOf2365_2190 from Listeria monocytogenes serotype 4b (strain F2365).